Reading from the N-terminus, the 569-residue chain is Peroxisomal targeting signal receptor (569 aa).

Residue Cys-9 forms a Glycyl cysteine thioester (Cys-Gly) (interchain with G-Cter in ubiquitin) linkage. Positions 10–32 are amphipathic helix 1 (AH1); that stretch reads AANANPLAQFFKQSQHDTSLEQS. Residue Lys-21 forms a Glycyl lysine isopeptide (Lys-Gly) (interchain with G-Cter in ubiquitin) linkage. The segment at 23–42 is disordered; sequence SQHDTSLEQSLRNSAHDTHQ. Residues 57-72 form an amphipathic helix 2 (AH2) region; it reads RAHMEQFMNQSTPFNF. Short sequence motifs (wxxxF/Y motif) lie at residues 118–122 and 183–187; these read WSSEF and WEQQF. An amphipathic helix 4 (AH4) region spans residues 218–234; the sequence is FDQVWDNIQETYADNML. Residues 243–247 carry the WxxxF/Y motif 3 motif; sequence WEKDF. TPR repeat units follow at residues 272 to 305, 306 to 339, 340 to 377, 378 to 415, 416 to 449, 450 to 483, and 484 to 517; these read LDAY…NPGH, VDAW…SPQN, LVAL…VAER, ARNA…ANMD, SEVQ…NPND, ALAW…NPNF, and VRAR…HEVE.

Belongs to the peroxisomal targeting signal receptor family. As to quaternary structure, interacts (via WxxxF/Y and LVxEF motifs) with PEX14; promoting translocation through the PEX13-PEX14 docking complex. Monoubiquitinated at Cys-9 by PEX2 during PEX5 passage through the retrotranslocation channel: monoubiquitination acts as a signal for PEX5 extraction and is required for proper export from peroxisomes and recycling. When PEX5 recycling is compromised, polyubiquitinated at Lys-21 by PEX10 during its passage through the retrotranslocation channel, leading to its degradation.

It localises to the cytoplasm. The protein localises to the cytosol. It is found in the peroxisome matrix. Functionally, receptor that mediates peroxisomal import of proteins containing a C-terminal PTS1-type tripeptide peroxisomal targeting signal (SKL-type). Binds to cargo proteins containing a PTS1 peroxisomal targeting signal in the cytosol, and translocates them into the peroxisome matrix by passing through the PEX13-PEX14 docking complex along with cargo proteins. PEX5 receptor is then retrotranslocated into the cytosol, leading to release of bound cargo in the peroxisome matrix, and reset for a subsequent peroxisome import cycle. In Pichia angusta (Yeast), this protein is Peroxisomal targeting signal receptor (PEX5).